We begin with the raw amino-acid sequence, 115 residues long: MNIMLTLLTNVTLASLLVLIAFWLPQLNAYSEKTSPYECGFDPMGSARLPFSMKFFLVAITFLLFDLEIALLLPLPWASQTNNLKTMLTMALFLLILLAASLAYEWTQKGLEWAE.

Transmembrane regions (helical) follow at residues 3–23 (IMLT…IAFW), 55–75 (FFLV…LLPL), and 86–106 (TMLT…AYEW).

It belongs to the complex I subunit 3 family. As to quaternary structure, core subunit of respiratory chain NADH dehydrogenase (Complex I) which is composed of 45 different subunits. Interacts with TMEM186. Interacts with TMEM242.

The protein resides in the mitochondrion inner membrane. It catalyses the reaction a ubiquinone + NADH + 5 H(+)(in) = a ubiquinol + NAD(+) + 4 H(+)(out). Core subunit of the mitochondrial membrane respiratory chain NADH dehydrogenase (Complex I) which catalyzes electron transfer from NADH through the respiratory chain, using ubiquinone as an electron acceptor. Essential for the catalytic activity of complex I. This chain is NADH-ubiquinone oxidoreductase chain 3, found in Sus scrofa (Pig).